The chain runs to 292 residues: MAQITAALVKELREKTSAGIMDAKKALVETNGNMEKAIDVLKERGVAKAAKKADRVAAEGMTDVIEAGNTAAIIELNSETDFVASNEKFLNLLHLTAKVILEHKPADLKAALAIPVEEGTLNDQIVQTSAHTGEKITLRRFNVVEKNDNQTFGVYSHMGGQISVITLLENSDSTTAKDIAMHIAAIAPKYLSREDVPKDVVEHEKSIQMKADDLGNKPDNIKEKIVEGRLGKFLDELALLNQPFVKGEGESVAEYLKKQGATIKSFIRYQVGEGIEKQESNLADEVAKQING.

The tract at residues 80-83 (TDFV) is involved in Mg(2+) ion dislocation from EF-Tu.

The protein belongs to the EF-Ts family.

It is found in the cytoplasm. Associates with the EF-Tu.GDP complex and induces the exchange of GDP to GTP. It remains bound to the aminoacyl-tRNA.EF-Tu.GTP complex up to the GTP hydrolysis stage on the ribosome. The polypeptide is Elongation factor Ts (Oenococcus oeni (strain ATCC BAA-331 / PSU-1)).